Consider the following 495-residue polypeptide: UDP-glycosyltransferase 73E1 (495 aa).

Residues Ser-299, 355–356 (WA), 373–381 (HCGWNSTIE), and 395–398 (FADQ) contribute to the UDP-alpha-D-glucose site.

Belongs to the UDP-glycosyltransferase family.

Functionally, may glycosylate diterpenes or flavonols in leaves. The sequence is that of UDP-glycosyltransferase 73E1 from Stevia rebaudiana (Stevia).